We begin with the raw amino-acid sequence, 173 residues long: MGNPCHFALFDLQPSFRLDLEQLAARYRELARQVHPDRFADAGEREQRLALERSACLNEAYQVLKTPSQRARYLLALRGPELPLEVTVQDPDFLLQQMQLREELEELQDDADLAGVAAFKRRLKTAQEQLNDSFAACWDDDTRREEAERLMRRMQFLDKLSHEVRQLEERLDD.

The 73-residue stretch at 5 to 77 (CHFALFDLQP…SQRARYLLAL (73 aa)) folds into the J domain.

The protein belongs to the HscB family. In terms of assembly, interacts with HscA and stimulates its ATPase activity.

Its function is as follows. Co-chaperone involved in the maturation of iron-sulfur cluster-containing proteins. Seems to help targeting proteins to be folded toward HscA. The polypeptide is Co-chaperone protein HscB homolog (Ectopseudomonas mendocina (strain ymp) (Pseudomonas mendocina)).